A 385-amino-acid chain; its full sequence is uncharacterized protein (385 aa).

Transmembrane regions (helical) follow at residues G12–A32, W50–G70, L90–A110, F132–I152, L195–L215, T233–W253, L272–L292, Y312–F332, and L335–W355.

This sequence to B.subtilis YxaH and YrkO.

It is found in the cell membrane. Functionally, involved in transport. This is an uncharacterized protein from Escherichia coli (strain K12).